Consider the following 167-residue polypeptide: E1B protein, small T-antigen (167 aa).

A disordered region spans residues 143–167 (GLDPVQEEEEEEENLRAGLDPSTEL).

It belongs to the adenoviridae E1B 19 kDa protein family.

Its subcellular location is the host cell membrane. The protein localises to the host nucleus envelope. The protein resides in the host nucleus lamina. In terms of biological role, putative adenovirus Bcl-2 homolog that inhibits apoptosis induced by TNF or FAS pathways, as well as p53-mediated apoptosis. Without E1B 19K function, virus production is compromised because of premature death of host cell. Interacts with Bax protein in cell lysates. This is E1B protein, small T-antigen from Human adenovirus F serotype 40 (HAdV-40).